The following is a 258-amino-acid chain: ADP-dependent (S)-NAD(P)H-hydrate dehydratase (258 aa).

A YjeF C-terminal domain is found at 1-258 (MGRLQRTLSN…VIECIPKTIR (258 aa)). Gly-201 is an AMP binding site. Asp-202 is a binding site for (6S)-NADPHX.

This sequence belongs to the NnrD/CARKD family. As to quaternary structure, homotetramer. Requires Mg(2+) as cofactor.

The enzyme catalyses (6S)-NADHX + ADP = AMP + phosphate + NADH + H(+). It catalyses the reaction (6S)-NADPHX + ADP = AMP + phosphate + NADPH + H(+). In terms of biological role, catalyzes the dehydration of the S-form of NAD(P)HX at the expense of ADP, which is converted to AMP. Together with NAD(P)HX epimerase, which catalyzes the epimerization of the S- and R-forms, the enzyme allows the repair of both epimers of NAD(P)HX, a damaged form of NAD(P)H that is a result of enzymatic or heat-dependent hydration. In Natrialba magadii (strain ATCC 43099 / DSM 3394 / CCM 3739 / CIP 104546 / IAM 13178 / JCM 8861 / NBRC 102185 / NCIMB 2190 / MS3) (Natronobacterium magadii), this protein is ADP-dependent (S)-NAD(P)H-hydrate dehydratase.